The primary structure comprises 426 residues: Nucleolar protein 12 (426 aa).

The disordered stretch occupies residues 26 to 128 (QSSGPVDTLE…SKRASRPDMK (103 aa)). Over residues 87-105 (LEEKYMQQVLKEDSDHESE) the composition is skewed to basic and acidic residues. RRM domains are found at residues 137-251 (RTVF…SVAH) and 259-339 (RSVF…RCRN). Basic residues predominate over residues 401 to 415 (KARSKTGRVTKRSQA). A disordered region spans residues 401-426 (KARSKTGRVTKRSQAFKKAEANKKQK). A compositionally biased stretch (basic and acidic residues) spans 417–426 (KKAEANKKQK).

It belongs to the RRM RBM34 family.

It localises to the nucleus. The protein resides in the nucleolus. Its function is as follows. Involved in pre-25S rRNA processing. In Eremothecium gossypii (strain ATCC 10895 / CBS 109.51 / FGSC 9923 / NRRL Y-1056) (Yeast), this protein is Nucleolar protein 12 (NOP12).